We begin with the raw amino-acid sequence, 422 residues long: Lipase member M (422 aa).

Positions 1-33 are cleaved as a signal peptide; sequence MSEILSRVWTVSHRVEIWLLILVAYLLQRNVNS. Asparagine 48 carries an N-linked (GlcNAc...) asparagine glycan. The AB hydrolase-1 domain occupies 92–392; that stretch reads PVVLLQHGLL…EWAHVDFIWG (301 aa). Serine 186 (nucleophile) is an active-site residue. Cysteine 260 and cysteine 269 are disulfide-bonded. Residues aspartate 357 and histidine 386 each act as charge relay system in the active site.

It belongs to the AB hydrolase superfamily. Lipase family.

The protein resides in the secreted. Functionally, plays a highly specific role in the last step of keratinocyte differentiation. May have an essential function in lipid metabolism of the most differentiated epidermal layers. This chain is Lipase member M (Lipm), found in Mus musculus (Mouse).